The primary structure comprises 100 residues: NADH-quinone oxidoreductase subunit K (100 aa).

3 consecutive transmembrane segments (helical) span residues L4 to M24, I28 to V48, and I60 to L80.

It belongs to the complex I subunit 4L family. As to quaternary structure, NDH-1 is composed of 13 different subunits. Subunits NuoA, H, J, K, L, M, N constitute the membrane sector of the complex.

It localises to the cell membrane. It catalyses the reaction a quinone + NADH + 5 H(+)(in) = a quinol + NAD(+) + 4 H(+)(out). Functionally, NDH-1 shuttles electrons from NADH, via FMN and iron-sulfur (Fe-S) centers, to quinones in the respiratory chain. The immediate electron acceptor for the enzyme in this species is believed to be ubiquinone. Couples the redox reaction to proton translocation (for every two electrons transferred, four hydrogen ions are translocated across the cytoplasmic membrane), and thus conserves the redox energy in a proton gradient. In Buchnera aphidicola subsp. Baizongia pistaciae (strain Bp), this protein is NADH-quinone oxidoreductase subunit K.